A 427-amino-acid chain; its full sequence is Enolase (427 aa).

A (2R)-2-phosphoglycerate-binding site is contributed by Q163. The Proton donor role is filled by E205. Positions 242, 285, and 312 each coordinate Mg(2+). (2R)-2-phosphoglycerate contacts are provided by K337, R366, S367, and K388. The Proton acceptor role is filled by K337.

The protein belongs to the enolase family. Requires Mg(2+) as cofactor.

The protein resides in the cytoplasm. Its subcellular location is the secreted. It is found in the cell surface. The catalysed reaction is (2R)-2-phosphoglycerate = phosphoenolpyruvate + H2O. It participates in carbohydrate degradation; glycolysis; pyruvate from D-glyceraldehyde 3-phosphate: step 4/5. Its function is as follows. Catalyzes the reversible conversion of 2-phosphoglycerate (2-PG) into phosphoenolpyruvate (PEP). It is essential for the degradation of carbohydrates via glycolysis. The polypeptide is Enolase (Thiobacillus denitrificans (strain ATCC 25259 / T1)).